Reading from the N-terminus, the 204-residue chain is Transcriptional regulator GfcR (204 aa).

It belongs to the purine/pyrimidine phosphoribosyltransferase family. GfcR subfamily.

This is Transcriptional regulator GfcR from Methanosarcina mazei (strain ATCC BAA-159 / DSM 3647 / Goe1 / Go1 / JCM 11833 / OCM 88) (Methanosarcina frisia).